A 110-amino-acid polypeptide reads, in one-letter code: Iron-sulfur cluster assembly protein CyaY (110 aa).

The protein belongs to the frataxin family.

Its function is as follows. Involved in iron-sulfur (Fe-S) cluster assembly. May act as a regulator of Fe-S biogenesis. The chain is Iron-sulfur cluster assembly protein CyaY from Pseudomonas putida (strain ATCC 700007 / DSM 6899 / JCM 31910 / BCRC 17059 / LMG 24140 / F1).